Reading from the N-terminus, the 177-residue chain is Large ribosomal subunit protein uL6 (177 aa).

This sequence belongs to the universal ribosomal protein uL6 family. As to quaternary structure, part of the 50S ribosomal subunit.

Its function is as follows. This protein binds to the 23S rRNA, and is important in its secondary structure. It is located near the subunit interface in the base of the L7/L12 stalk, and near the tRNA binding site of the peptidyltransferase center. In Verminephrobacter eiseniae (strain EF01-2), this protein is Large ribosomal subunit protein uL6.